Consider the following 47-residue polypeptide: MTLLQVHNFVDNSGRKKWLSRTLGQTRCPGKSMGREKFVKNNCSAIS.

The protein is Protein YpaB (ypaB) of Escherichia coli (strain K12).